Consider the following 210-residue polypeptide: Somatotropin (210 aa).

The signal sequence occupies residues 1 to 22; the sequence is MGQVFLLMPVLLVSCFLSQGAA. His-38 lines the Zn(2+) pocket. A disulfide bridge links Cys-71 with Cys-183. Residue Glu-192 coordinates Zn(2+). A disulfide bond links Cys-200 and Cys-208.

This sequence belongs to the somatotropin/prolactin family.

The protein localises to the secreted. In terms of biological role, growth hormone plays an important role in growth control and is involved in the regulation of several anabolic processes. Implicated as an osmoregulatory substance important for seawater adaptation. In Salmo salar (Atlantic salmon), this protein is Somatotropin (gh).